Consider the following 405-residue polypeptide: L-carnitine CoA-transferase (405 aa).

CoA-binding residues include Lys-97 and Arg-104. Asp-169 serves as the catalytic Nucleophile.

The protein belongs to the CoA-transferase III family. CaiB subfamily. In terms of assembly, homodimer.

It is found in the cytoplasm. It catalyses the reaction crotonobetainyl-CoA + (R)-carnitine = crotonobetaine + (R)-carnitinyl-CoA. The catalysed reaction is 4-(trimethylamino)butanoyl-CoA + (R)-carnitine = (R)-carnitinyl-CoA + 4-(trimethylamino)butanoate. The protein operates within amine and polyamine metabolism; carnitine metabolism. In terms of biological role, catalyzes the reversible transfer of the CoA moiety from gamma-butyrobetainyl-CoA to L-carnitine to generate L-carnitinyl-CoA and gamma-butyrobetaine. Is also able to catalyze the reversible transfer of the CoA moiety from gamma-butyrobetainyl-CoA or L-carnitinyl-CoA to crotonobetaine to generate crotonobetainyl-CoA. The protein is L-carnitine CoA-transferase of Escherichia coli (strain SE11).